Reading from the N-terminus, the 137-residue chain is Large ribosomal subunit protein uL16 (137 aa).

It belongs to the universal ribosomal protein uL16 family. In terms of assembly, part of the 50S ribosomal subunit.

In terms of biological role, binds 23S rRNA and is also seen to make contacts with the A and possibly P site tRNAs. This Pseudomonas aeruginosa (strain LESB58) protein is Large ribosomal subunit protein uL16.